A 201-amino-acid polypeptide reads, in one-letter code: CDP-diacylglycerol--serine O-phosphatidyltransferase (201 aa).

6 helical membrane-spanning segments follow: residues 19–39 (IITGLLAILLNSFSLIYLSII), 57–77 (FGAELDSISDVVSFGVAPAYL), 88–108 (LISAIIFCLCGALRLARFGIL), 112–132 (GFIGLPIPAGALLLVGFCQLI), 133–153 (NSYLINSILAILIGLLMISDI), and 162–182 (IFIYIFAVSLCLAIVGIPHFA).

The protein belongs to the CDP-alcohol phosphatidyltransferase class-I family.

Its subcellular location is the cell membrane. The enzyme catalyses a CDP-1,2-diacyl-sn-glycerol + L-serine = a 1,2-diacyl-sn-glycero-3-phospho-L-serine + CMP + H(+). The sequence is that of CDP-diacylglycerol--serine O-phosphatidyltransferase (pssA) from Methanocaldococcus jannaschii (strain ATCC 43067 / DSM 2661 / JAL-1 / JCM 10045 / NBRC 100440) (Methanococcus jannaschii).